The following is a 196-amino-acid chain: UMP-CMP kinase (196 aa).

An ATP-binding site is contributed by 13–18; the sequence is GAGKGT. Residues 33–63 are NMP; it reads SAGDLLREERSRTDSEFGQLIDSYIKEGKIV. A ribonucleoside 5'-phosphate-binding positions include Arg-39, 61–63, and 93–96; these read KIV and GFPR. A CMP-binding site is contributed by Asn-100. The tract at residues 133–143 is LID; the sequence is ERGKSSGRTDD. Arg-134 contacts ATP. 2 residues coordinate a ribonucleoside 5'-phosphate: Arg-140 and Arg-151. Position 179 (Arg-179) interacts with ATP.

The protein belongs to the adenylate kinase family. UMP-CMP kinase subfamily. In terms of assembly, monomer. It depends on Mg(2+) as a cofactor.

Its subcellular location is the nucleus. It localises to the cytoplasm. It carries out the reaction CMP + ATP = CDP + ADP. It catalyses the reaction dCMP + ATP = dCDP + ADP. The enzyme catalyses UMP + ATP = UDP + ADP. The catalysed reaction is a 2'-deoxyribonucleoside 5'-diphosphate + ATP = a 2'-deoxyribonucleoside 5'-triphosphate + ADP. It carries out the reaction a ribonucleoside 5'-diphosphate + ATP = a ribonucleoside 5'-triphosphate + ADP. Functionally, catalyzes the phosphorylation of pyrimidine nucleoside monophosphates at the expense of ATP. Plays an important role in de novo pyrimidine nucleotide biosynthesis. Has preference for UMP and CMP as phosphate acceptors. Also displays broad nucleoside diphosphate kinase activity. This Danio rerio (Zebrafish) protein is UMP-CMP kinase (cmpk).